A 247-amino-acid polypeptide reads, in one-letter code: MSSSDCPSPLPTAPKLQVDSVTFPPSVISPASSNTLFLGGAGVRGLEIQGKFVIFTVIGVYLDPVSVPSLSVKWEGKTTEELTESVPFFREIVIGAFEKFIKVTMKLPLTGQQYSEKVTENCVAIWKSLGIYTDSEAKAVERFLEVFKDETFPPGASILFALSPEGSLTVAFSKDDSIPETGKAVIENKLLAEAVLESIIGKNRVSPGARLRVAERLAQLMKENKVEEDATKTDQEEANDLSLAKEN.

Residues T56, N121, and S198 each coordinate substrate. Residues 223–235 (ENKVEEDATKTDQ) are compositionally biased toward basic and acidic residues. A disordered region spans residues 223-247 (ENKVEEDATKTDQEEANDLSLAKEN).

The protein belongs to the chalcone isomerase family.

The catalysed reaction is a chalcone = a flavanone.. The protein operates within secondary metabolite biosynthesis; flavonoid biosynthesis. Catalyzes the intramolecular cyclization of bicyclic chalcones into tricyclic (S)-flavanones. Responsible for the isomerization of 4,2',4',6'-tetrahydroxychalcone (also termed chalcone) into naringenin. The chain is Chalcone--flavanone isomerase (CHI) from Raphanus sativus (Radish).